Reading from the N-terminus, the 425-residue chain is Proline--tRNA ligase (425 aa).

It belongs to the class-II aminoacyl-tRNA synthetase family. ProS type 2 subfamily. In terms of assembly, homodimer.

It is found in the cytoplasm. The enzyme catalyses tRNA(Pro) + L-proline + ATP = L-prolyl-tRNA(Pro) + AMP + diphosphate. Catalyzes the attachment of proline to tRNA(Pro) in a two-step reaction: proline is first activated by ATP to form Pro-AMP and then transferred to the acceptor end of tRNA(Pro). The sequence is that of Proline--tRNA ligase from Anaplasma marginale (strain St. Maries).